The chain runs to 101 residues: Small ribosomal subunit protein uS14 (101 aa).

Belongs to the universal ribosomal protein uS14 family. In terms of assembly, part of the 30S ribosomal subunit. Contacts proteins S3 and S10.

Binds 16S rRNA, required for the assembly of 30S particles and may also be responsible for determining the conformation of the 16S rRNA at the A site. The protein is Small ribosomal subunit protein uS14 of Citrobacter koseri (strain ATCC BAA-895 / CDC 4225-83 / SGSC4696).